A 520-amino-acid polypeptide reads, in one-letter code: Cytochrome P450 716A67 (520 aa).

The helical transmembrane segment at 4–24 threads the bilayer; it reads SLAIYYGIILITVTLGLVYTW. Cysteine 466 contacts heme.

It belongs to the cytochrome P450 family. The cofactor is heme.

The protein resides in the membrane. Catalyzes hydroxylation at the C-2 position of different intermediates of the hemolytic sapogenin biosynthetic pathway downstream of oleanolic acid synthesis. The protein is Cytochrome P450 716A67 of Medicago truncatula (Barrel medic).